The primary structure comprises 100 residues: Putative septation protein SpoVG (100 aa).

Belongs to the SpoVG family.

Its function is as follows. Could be involved in septation. In Staphylococcus aureus (strain MRSA252), this protein is Putative septation protein SpoVG.